The chain runs to 382 residues: Adaptive-response sensory kinase SasA (382 aa).

In terms of domain architecture, Histidine kinase spans 160 to 382; the sequence is MLAHDLRSPL…CFHFTLPVYR (223 aa). His163 carries the post-translational modification Phosphohistidine; by autocatalysis.

Homooligomerizes. Interacts with KaiC. Participates in the KaiABC clock complex, whose core is composed of a KaiC homohexamer, 6 KaiB and up to 6 KaiA dimers. SasA and KaiB(fs) compete to bind to KaiC.

It carries out the reaction ATP + protein L-histidine = ADP + protein N-phospho-L-histidine.. Functionally, member of the two-component regulatory system SasA/RpaA involved in genome-wide circadian gene expression. One of several clock output pathways. Participates in the Kai clock protein complex, the main circadian regulator in cyanobacteria, via its interaction with KaiC. KaiC enhances the autophosphorylation activity of SasA, which then transfers its phosphate group to RpaA to activate it. In addition to its output function, recruits fold-shifted KaiB (KaiB(fs)) to KaiC to cooperatively form the KaiB(6):KaiC(6) complex (independent of SasA kinase activity). Required for robustness of the circadian rhythm of gene expression and is involved in clock output, also required for adaptation to light/dark cycles. This chain is Adaptive-response sensory kinase SasA, found in Crocosphaera subtropica (strain ATCC 51142 / BH68) (Cyanothece sp. (strain ATCC 51142)).